Here is a 2152-residue protein sequence, read N- to C-terminus: Oxygen-regulated protein 1 (2152 aa).

Positions 1 to 19 (MSDTPSTGFSIIHPTSSED) are enriched in polar residues. A disordered region spans residues 1–25 (MSDTPSTGFSIIHPTSSEDQVPPPR). Doublecortin domains are found at residues 36 to 118 (KRIS…VDLD) and 154 to 233 (RSLV…GNYD). Disordered regions lie at residues 353–375 (VSKTGPSNNDEKSEMSFPGRTES), 1435–1455 (DMEEPRTSEEPGSITNSMTSS), and 1587–1616 (DWSDYRPDSDSEQPYKTSSDDPNDSGELAQ).

In terms of assembly, interacts (via the doublecortin domains) with microtubules. Interacts with RP1L1. Interacts with MAK.

The protein resides in the cytoplasm. It is found in the cytoskeleton. The protein localises to the cilium axoneme. Its subcellular location is the cell projection. It localises to the cilium. The protein resides in the photoreceptor outer segment. Functionally, microtubule-associated protein regulating the stability and length of the microtubule-based axoneme of photoreceptors. Required for the differentiation of photoreceptor cells, it plays a role in the organization of the outer segment of rod and cone photoreceptors ensuring the correct orientation and higher-order stacking of outer segment disks along the photoreceptor axoneme. This Papio hamadryas (Hamadryas baboon) protein is Oxygen-regulated protein 1 (RP1).